The primary structure comprises 646 residues: Chaperone protein DnaK (646 aa).

Thr197 carries the phosphothreonine; by autocatalysis modification. The segment at 599-646 is disordered; sequence QQGAQAGADPNAGSSQGAQAGTDYGTSGPKTGTADDVDYEVVNDDNDK. The segment covering 610–628 has biased composition (polar residues); that stretch reads AGSSQGAQAGTDYGTSGPK. Positions 633–646 are enriched in acidic residues; it reads DDVDYEVVNDDNDK.

Belongs to the heat shock protein 70 family.

Acts as a chaperone. The polypeptide is Chaperone protein DnaK (Treponema denticola (strain ATCC 35405 / DSM 14222 / CIP 103919 / JCM 8153 / KCTC 15104)).